The sequence spans 178 residues: CASP-like protein 2U3 (178 aa).

Residues 1–4 (MACR) are Cytoplasmic-facing. Residues 5–25 (VMEVLLRVLAILLSIAGALVM) form a helical membrane-spanning segment. At 26-52 (AKDKQDTFVMLGTVPVPLYARHSYVEA) the chain is on the extracellular side. A helical transmembrane segment spans residues 53–73 (FVFLVYANGIVAIYCFIAVLL). The Cytoplasmic segment spans residues 74–80 (SLLAKSR). Residues 81–101 (VLAGLLFFMDQALAYLLLAAA) traverse the membrane as a helical segment. Residues 102-132 (AASTEVAYIAKRGEKKLVWGEVCSNFEHFCN) lie on the Extracellular side of the membrane. Residues 133 to 153 (LVGVSLVLTFLSVLVLVTLAI) form a helical membrane-spanning segment. At 154 to 178 (LSGKRLFGHPPLCAPPSTPPVHQGV) the chain is on the cytoplasmic side.

It belongs to the Casparian strip membrane proteins (CASP) family. In terms of assembly, homodimer and heterodimers.

It is found in the cell membrane. The sequence is that of CASP-like protein 2U3 from Pteridium aquilinum subsp. aquilinum (Bracken fern).